The following is a 183-amino-acid chain: Potassium-transporting ATPase KdpC subunit (183 aa).

The chain crosses the membrane as a helical span at residues 11-31; the sequence is LILLLAVVTGALYPLAVTGVA.

It belongs to the KdpC family. As to quaternary structure, the system is composed of three essential subunits: KdpA, KdpB and KdpC.

Its subcellular location is the cell inner membrane. In terms of biological role, part of the high-affinity ATP-driven potassium transport (or Kdp) system, which catalyzes the hydrolysis of ATP coupled with the electrogenic transport of potassium into the cytoplasm. This subunit acts as a catalytic chaperone that increases the ATP-binding affinity of the ATP-hydrolyzing subunit KdpB by the formation of a transient KdpB/KdpC/ATP ternary complex. This chain is Potassium-transporting ATPase KdpC subunit, found in Pseudomonas putida (strain W619).